The chain runs to 815 residues: (-)-kolavenyl diphosphate synthase TPS10, chloroplastic (815 aa).

Residues 1-50 (MFMSSSSSSHARRPQLSSFSYLHPPLPFPGLSFSSTRDKRVNFDSTRIIS) constitute a chloroplast transit peptide. A substrate-binding site is contributed by Lys-247. Residues Asp-379 and Asp-381 each coordinate Mg(2+). The DXDD motif motif lies at 379–382 (DIDD). A substrate-binding site is contributed by Lys-465.

It belongs to the terpene synthase family. Tpsc subfamily. Mg(2+) serves as cofactor.

The protein localises to the plastid. The protein resides in the chloroplast. The catalysed reaction is (2E,6E,10E)-geranylgeranyl diphosphate = (-)-kolavenyl diphosphate. With respect to regulation, inhibited by high concentrations of magnesium. Its function is as follows. Diterpene synthase that catalyzes the formation of (-)-kolavenyl diphosphate from geranylgeranyl diphosphate (GGPP). In Tripterygium wilfordii (Thunder God vine), this protein is (-)-kolavenyl diphosphate synthase TPS10, chloroplastic.